Here is a 700-residue protein sequence, read N- to C-terminus: uncharacterized protein (700 aa).

A run of 9 helical transmembrane segments spans residues 24-44 (VLCL…GLLF), 67-87 (LIIG…LLAK), 89-109 (VPLP…AELG), 115-135 (LLPA…YMPV), 139-159 (LLIY…WFWI), 383-403 (LMGT…VLLV), 420-440 (VGTV…IPEG), 461-481 (YGWA…LLWL), and 491-511 (LIDT…LWPQ).

Belongs to the YccS/YhfK family.

The protein resides in the cell membrane. This is an uncharacterized protein from Escherichia coli (strain K12).